A 355-amino-acid polypeptide reads, in one-letter code: tRNA pseudouridine synthase D (355 aa).

The active-site Nucleophile is the Asp84. One can recognise a TRUD domain in the interval 160 to 306 (GVPNYFGLQR…MAHERRILRL (147 aa)).

Belongs to the pseudouridine synthase TruD family.

It catalyses the reaction uridine(13) in tRNA = pseudouridine(13) in tRNA. Its function is as follows. Responsible for synthesis of pseudouridine from uracil-13 in transfer RNAs. The polypeptide is tRNA pseudouridine synthase D (Pseudomonas aeruginosa (strain LESB58)).